The chain runs to 195 residues: ATP-dependent Clp protease proteolytic subunit (195 aa).

The active-site Nucleophile is the S98. The active site involves H123.

This sequence belongs to the peptidase S14 family. Fourteen ClpP subunits assemble into 2 heptameric rings which stack back to back to give a disk-like structure with a central cavity, resembling the structure of eukaryotic proteasomes.

It is found in the cytoplasm. It carries out the reaction Hydrolysis of proteins to small peptides in the presence of ATP and magnesium. alpha-casein is the usual test substrate. In the absence of ATP, only oligopeptides shorter than five residues are hydrolyzed (such as succinyl-Leu-Tyr-|-NHMec, and Leu-Tyr-Leu-|-Tyr-Trp, in which cleavage of the -Tyr-|-Leu- and -Tyr-|-Trp bonds also occurs).. Functionally, cleaves peptides in various proteins in a process that requires ATP hydrolysis. Has a chymotrypsin-like activity. Plays a major role in the degradation of misfolded proteins. The sequence is that of ATP-dependent Clp protease proteolytic subunit from Helicobacter pylori (strain G27).